The primary structure comprises 99 residues: ATP-dependent Clp protease adapter protein ClpS (99 aa).

The protein belongs to the ClpS family. As to quaternary structure, binds to the N-terminal domain of the chaperone ClpA.

Involved in the modulation of the specificity of the ClpAP-mediated ATP-dependent protein degradation. The chain is ATP-dependent Clp protease adapter protein ClpS from Helicobacter hepaticus (strain ATCC 51449 / 3B1).